Here is a 201-residue protein sequence, read N- to C-terminus: Recombination protein RecR (201 aa).

The C4-type zinc-finger motif lies at 60-75; it reads CHECGNVDTSDPCTIC. One can recognise a Toprim domain in the interval 83-178; it reads SILVVVEDVS…KVTKLAHGVP (96 aa).

This sequence belongs to the RecR family.

May play a role in DNA repair. It seems to be involved in an RecBC-independent recombinational process of DNA repair. It may act with RecF and RecO. The polypeptide is Recombination protein RecR (Methylobacterium nodulans (strain LMG 21967 / CNCM I-2342 / ORS 2060)).